A 515-amino-acid polypeptide reads, in one-letter code: MKDSSNLLEMRNISKEFPGVKALDNVTLKVKKGSVHALMGENGAGKSTLMKCLFGIYHPNSGEIFISGQKVQFKNSKHALDNGVSMVHQELNQVRERNVMDNLWLGRYPKKGLFIDEKKMYDETEKIFKDLDINVNPRDKVSTLSVSQMQMVEIAKAVSYNSKIIVMDEPTSSLTEKEVSHLFKIINKLRKQGISIIYISHKMEEILEISDEVTIMRDGKWIATEKASDLTMDLIIKLMVGRELTDRFPKKDHIPKETTLEVNNLSDAKNELKNVSFKLRKGEILGIAGLVGAKRTETLETLFGLREKGSGDIILHGKKVDNSKPFKAMQNGFALVTEERRQTGIFGKLPIDFNSIIANIDSYKTSTGLLANERISKDTQWVIDSMKVKTPSQKTLIGSLSGGNQQKIVIGKWLLRKPEILLLDEPTRGIDVGAKFEIYQLINELAKEDKGIIMVSSEMPELLGVCDRILVMSNGRVSGIVNANETTQEEIMHLSAKYLSVTGGVNNANQIKEKV.

ABC transporter domains are found at residues 8 to 243 (LEMR…VGRE) and 254 to 499 (IPKE…AKYL). Position 40–47 (40–47 (GENGAGKS)) interacts with ATP.

It belongs to the ABC transporter superfamily. Galactose/methyl galactoside importer (TC 3.A.1.2.3) family. As to quaternary structure, the complex is composed of one ATP-binding protein (MglA), two transmembrane proteins (MglC) and a solute-binding protein (MglB).

Its subcellular location is the cell membrane. The enzyme catalyses D-galactose(out) + ATP + H2O = D-galactose(in) + ADP + phosphate + H(+). The catalysed reaction is methyl beta-D-galactoside(out) + ATP + H2O = methyl beta-D-galactoside(in) + ADP + phosphate + H(+). Functionally, part of the ABC transporter complex MglABC involved in galactose/methyl galactoside import. Responsible for energy coupling to the transport system. The polypeptide is Galactose/methyl galactoside import ATP-binding protein MglA (Clostridium perfringens (strain 13 / Type A)).